A 586-amino-acid polypeptide reads, in one-letter code: MGVNAVHWFRKGLRLHDNPALKECIQGADTIRCVYILDPWFAGSSNVGINRWRFLLQCLEDLDANLRKLNSRLFVIRGQPADVFPRLFKEWNITKLSIEYDSEPFGKERDAAIKKLATEAGVEVIVRISHTLYDLDKIIELNGGQPPLTYKRFQTLISKMEPLEIPVETITSEVIEKCTTPLSDDHDEKYGVPSLEELGFDTDGLSSAVWPGGETEALTRLERHLERKAWVANFERPRMNANSLLASPTGLSPYLRFGCLSCRLFYFKLTDLYKKVKRNSSPPLSLYGQLLWREFFYTAATNNPRFDKMEGNPICVQIPWDKNPEALAKWAEGRTGFPWIDAIMTQLRQEGWIHHLARHAVACFLTRGDLWISWEEGMKVFEELLLDADWSINAGSWMWLSCSSFFQQFFHCYCPVGFGRRTDPNGDYIRRYLPVLRGFPAKYIYDPWNAPEGIQKVAKCLIGINYPKPMVNHAEASRLNIERMKQIYQQLSRYRGLGLLASVPSNPNGNGGFMGYSTENIPGCSSSGSCSQGSGILHYTHGDSQQTHLLKQGRSSMGTGLSGGKRPSQEEDTQSIGPKVQRQSTN.

The Photolyase/cryptochrome alpha/beta domain occupies 3–132 (VNAVHWFRKG…EVIVRISHTL (130 aa)). Lys-11 participates in a covalent cross-link: Glycyl lysine isopeptide (Lys-Gly) (interchain with G-Cter in ubiquitin). The short motif at 50–54 (NRWRF) is the LIR 1 element. A Phosphoserine; by AMPK modification is found at Ser-71. The LIR 2 motif lies at 82–87 (DVFPRL). Residue Lys-107 forms a Glycyl lysine isopeptide (Lys-Gly) (interchain with G-Cter in ubiquitin) linkage. The short motif at 151–156 (KRFQTL) is the LIR 3 element. Lys-159 participates in a covalent cross-link: Glycyl lysine isopeptide (Lys-Gly) (interchain with G-Cter in ubiquitin). Ser-247 carries the phosphoserine; by MAPK modification. Ser-252 is a binding site for FAD. 2 consecutive short sequence motifs (LIR) follow at residues 255–260 (LRFGCL) and 271–276 (DLYKKV). At Ser-280 the chain carries Phosphoserine; by AMPK. The short motif at 285 to 290 (SLYGQL) is the LIR 6 element. Gln-289 contributes to the FAD binding site. Residue Lys-329 forms a Glycyl lysine isopeptide (Lys-Gly) (interchain with G-Cter in ubiquitin) linkage. Residues 335–339 (TGFPW) carry the LIR 7 motif. Residue His-355 participates in FAD binding. The required for inhibition of CLOCK-BMAL1-mediated transcription stretch occupies residues 371-470 (WISWEEGMKV…LIGINYPKPM (100 aa)). An LIR 8 motif is present at residues 379 to 384 (KVFEEL). 387-389 (DAD) lines the FAD pocket. 3 consecutive short sequence motifs (LIR) follow at residues 395-400 (GSWMWL), 411-416 (HCYCPV), and 430-435 (RRYLPV). Residues 471-493 (VNHAEASRLNIERMKQIYQQLSR) are interaction with TIMELESS. Lys-485 participates in a covalent cross-link: Glycyl lysine isopeptide (Lys-Gly) (interchain with G-Cter in ubiquitin). 2 consecutive short sequence motifs (LIR) follow at residues 486–491 (QIYQQL) and 492–497 (SRYRGL). Residues 545–559 (QQTHLLKQGRSSMGT) show a composition bias toward polar residues. The disordered stretch occupies residues 545–586 (QQTHLLKQGRSSMGTGLSGGKRPSQEEDTQSIGPKVQRQSTN). A Glycyl lysine isopeptide (Lys-Gly) (interchain with G-Cter in ubiquitin) cross-link involves residue Lys-565. At Ser-568 the chain carries Phosphoserine.

Belongs to the DNA photolyase class-1 family. In terms of assembly, component of the circadian core oscillator, which includes the CRY proteins, CLOCK or NPAS2, BMAL1 or BMAL2, CSNK1D and/or CSNK1E, TIMELESS, and the PER proteins. Interacts directly with TIMELESS. Interacts directly with PER1, PER2 and PER3; interaction with PER2 inhibits its ubiquitination and vice versa. Interacts with FBXL21. Interacts with FBXL3. Interacts with CLOCK-BMAL1 independently of PER2 and DNA. Interacts with HDAC1, HDAC2 and SIN3B. Interacts with nuclear receptors AR, NR1D1, NR3C1/GR, RORA and RORC; the interaction with at least NR3C1/GR is ligand dependent. Interacts with PRKDC. Interacts with the G protein subunit alpha GNAS; the interaction may block GPCR-mediated regulation of cAMP concentrations. Interacts with PRMT5. Interacts with EZH2. Interacts with MYBBP1A, DOCK7, HNRNPU, RPL7A, RPL8 and RPS3. Interacts with PPP5C (via TPR repeats). Interacts with MAP1LC3B. Interacts with CLOCK. Interacts with BMAL1. Interacts weakly with HDAC3; this interaction is enhanced in the presence of FBXL3. Interacts with TRIM28, KCTD5 and DDB1. Interacts with FOXO1. Interacts with DTL and DDB1-CUL4A complex. Interacts with HNF4A. Interacts with PSMD2 in a KDM8-dependent manner. Interacts with KDM8 in a FBXL3-dependent manner. Interacts with PPARG in a ligand-dependent manner. Interacts with PPARD (via domain NR LBD) and NR1I2 (via domain NR LBD) in a ligand-dependent manner. Interacts with PPARA, NR1I3 and VDR. Requires FAD as cofactor. The cofactor is (6R)-5,10-methylene-5,6,7,8-tetrahydrofolate. Phosphorylation on Ser-247 by MAPK is important for the inhibition of CLOCK-BMAL1-mediated transcriptional activity. Phosphorylation by CSNK1E requires interaction with PER1 or PER2. Phosphorylation at Ser-71 and Ser-280 by AMPK decreases protein stability. Phosphorylation at Ser-568 exhibits a robust circadian rhythm with a peak at CT8, increases protein stability, prevents SCF(FBXL3)-mediated degradation and is antagonized by interaction with PRKDC. In terms of processing, ubiquitinated by the SCF(FBXL3) and SCF(FBXL21) complexes, regulating the balance between degradation and stabilization. The SCF(FBXL3) complex is mainly nuclear and mediates ubiquitination and subsequent degradation of CRY1. In contrast, cytoplasmic SCF(FBXL21) complex-mediated ubiquitination leads to stabilize CRY1 and counteract the activity of the SCF(FBXL3) complex. The SCF(FBXL3) and SCF(FBXL21) complexes probably mediate ubiquitination at different Lys residues. Ubiquitination at Lys-11 and Lys-107 are specifically ubiquitinated by the SCF(FBXL21) complex but not by the SCF(FBXL3) complex. Ubiquitination may be inhibited by PER2. Deubiquitinated by USP7. Post-translationally, undergoes autophagy-mediated degradation in the liver in a time-dependent manner. Autophagic degradation of CRY1 (an inhibitor of gluconeogenesis) occurs during periods of reduced feeding allowing induction of gluconeogenesis and maintenance of blood glucose levels.

Its subcellular location is the cytoplasm. The protein resides in the nucleus. Functionally, transcriptional repressor which forms a core component of the circadian clock. The circadian clock, an internal time-keeping system, regulates various physiological processes through the generation of approximately 24 hour circadian rhythms in gene expression, which are translated into rhythms in metabolism and behavior. It is derived from the Latin roots 'circa' (about) and 'diem' (day) and acts as an important regulator of a wide array of physiological functions including metabolism, sleep, body temperature, blood pressure, endocrine, immune, cardiovascular, and renal function. Consists of two major components: the central clock, residing in the suprachiasmatic nucleus (SCN) of the brain, and the peripheral clocks that are present in nearly every tissue and organ system. Both the central and peripheral clocks can be reset by environmental cues, also known as Zeitgebers (German for 'timegivers'). The predominant Zeitgeber for the central clock is light, which is sensed by retina and signals directly to the SCN. The central clock entrains the peripheral clocks through neuronal and hormonal signals, body temperature and feeding-related cues, aligning all clocks with the external light/dark cycle. Circadian rhythms allow an organism to achieve temporal homeostasis with its environment at the molecular level by regulating gene expression to create a peak of protein expression once every 24 hours to control when a particular physiological process is most active with respect to the solar day. Transcription and translation of core clock components (CLOCK, NPAS2, BMAL1, BMAL2, PER1, PER2, PER3, CRY1 and CRY2) plays a critical role in rhythm generation, whereas delays imposed by post-translational modifications (PTMs) are important for determining the period (tau) of the rhythms (tau refers to the period of a rhythm and is the length, in time, of one complete cycle). A diurnal rhythm is synchronized with the day/night cycle, while the ultradian and infradian rhythms have a period shorter and longer than 24 hours, respectively. Disruptions in the circadian rhythms contribute to the pathology of cardiovascular diseases, cancer, metabolic syndromes and aging. A transcription/translation feedback loop (TTFL) forms the core of the molecular circadian clock mechanism. Transcription factors, CLOCK or NPAS2 and BMAL1 or BMAL2, form the positive limb of the feedback loop, act in the form of a heterodimer and activate the transcription of core clock genes and clock-controlled genes (involved in key metabolic processes), harboring E-box elements (5'-CACGTG-3') within their promoters. The core clock genes: PER1/2/3 and CRY1/2 which are transcriptional repressors form the negative limb of the feedback loop and interact with the CLOCK|NPAS2-BMAL1|BMAL2 heterodimer inhibiting its activity and thereby negatively regulating their own expression. This heterodimer also activates nuclear receptors NR1D1/2 and RORA/B/G, which form a second feedback loop and which activate and repress BMAL1 transcription, respectively. CRY1 and CRY2 have redundant functions but also differential and selective contributions at least in defining the pace of the SCN circadian clock and its circadian transcriptional outputs. More potent transcriptional repressor in cerebellum and liver than CRY2, though more effective in lengthening the period of the SCN oscillator. On its side, CRY2 seems to play a critical role in tuning SCN circadian period by opposing the action of CRY1. With CRY2, is dispensable for circadian rhythm generation but necessary for the development of intercellular networks for rhythm synchrony. Capable of translocating circadian clock core proteins such as PER proteins to the nucleus. Interacts with CLOCK-BMAL1 independently of PER proteins and is found at CLOCK-BMAL1-bound sites, suggesting that CRY may act as a molecular gatekeeper to maintainCLOCK-BMAL1 in a poised and repressed state until the proper time for transcriptional activation. Represses the CLOCK-BMAL1 induced transcription of BHLHE40/DEC1, ATF4, MTA1, KLF10 and NAMPT. May repress circadian target genes expression in collaboration with HDAC1 and HDAC2 through histone deacetylation. Mediates the clock-control activation of ATR and modulates ATR-mediated DNA damage checkpoint. In liver, mediates circadian regulation of cAMP signaling and gluconeogenesis by binding to membrane-coupled G proteins and blocking glucagon-mediated increases in intracellular cAMP concentrations and CREB1 phosphorylation. Inhibits hepatic gluconeogenesis by decreasing nuclear FOXO1 levels that down-regulates gluconeogenic gene expression. Besides its role in the maintenance of the circadian clock, is also involved in the regulation of other processes. Represses glucocorticoid receptor NR3C1/GR-induced transcriptional activity by binding to glucocorticoid response elements (GREs). Plays a key role in glucose and lipid metabolism modulation, in part, through the transcriptional regulation of genes involved in these pathways, such as LEP or ACSL4. Represses PPARD and its target genes in the skeletal muscle and limits exercise capacity. Plays an essential role in the generation of circadian rhythms in the retina. Represses the transcriptional activity of NR1I2. The sequence is that of Cryptochrome-1 (CRY1) from Macaca fascicularis (Crab-eating macaque).